The primary structure comprises 187 residues: GTP cyclohydrolase 1 (187 aa).

Zn(2+) is bound by residues Cys78, His81, and Cys149.

The protein belongs to the GTP cyclohydrolase I family. As to quaternary structure, toroid-shaped homodecamer, composed of two pentamers of five dimers.

The enzyme catalyses GTP + H2O = 7,8-dihydroneopterin 3'-triphosphate + formate + H(+). Its pathway is cofactor biosynthesis; 7,8-dihydroneopterin triphosphate biosynthesis; 7,8-dihydroneopterin triphosphate from GTP: step 1/1. In Wolinella succinogenes (strain ATCC 29543 / DSM 1740 / CCUG 13145 / JCM 31913 / LMG 7466 / NCTC 11488 / FDC 602W) (Vibrio succinogenes), this protein is GTP cyclohydrolase 1.